Here is a 20-residue protein sequence, read N- to C-terminus: Snaclec ophioluxin subunit alpha (20 aa).

C4 and C15 are oxidised to a cystine. The C-type lectin domain maps to 11 to 20 (YDQHCYRIIN).

This sequence belongs to the snaclec family. Heterodimer of subunits alpha and beta; disulfide-linked. As to expression, expressed by the venom gland.

The protein resides in the secreted. Its function is as follows. Binds to the platelet and collagen receptor glycoprotein VI (GP6) and activates platelet aggregation. In Ophiophagus hannah (King cobra), this protein is Snaclec ophioluxin subunit alpha.